We begin with the raw amino-acid sequence, 252 residues long: 1-(5-phosphoribosyl)-5-[(5-phosphoribosylamino)methylideneamino] imidazole-4-carboxamide isomerase (252 aa).

Catalysis depends on D8, which acts as the Proton acceptor. D129 functions as the Proton donor in the catalytic mechanism.

Belongs to the HisA/HisF family.

It is found in the cytoplasm. It carries out the reaction 1-(5-phospho-beta-D-ribosyl)-5-[(5-phospho-beta-D-ribosylamino)methylideneamino]imidazole-4-carboxamide = 5-[(5-phospho-1-deoxy-D-ribulos-1-ylimino)methylamino]-1-(5-phospho-beta-D-ribosyl)imidazole-4-carboxamide. It functions in the pathway amino-acid biosynthesis; L-histidine biosynthesis; L-histidine from 5-phospho-alpha-D-ribose 1-diphosphate: step 4/9. This chain is 1-(5-phosphoribosyl)-5-[(5-phosphoribosylamino)methylideneamino] imidazole-4-carboxamide isomerase, found in Synechococcus sp. (strain RCC307).